The primary structure comprises 134 residues: D-ribose pyranase (134 aa).

The active-site Proton donor is the His-20. Substrate-binding positions include Asp-28, His-101, and 123–125 (YSN).

It belongs to the RbsD / FucU family. RbsD subfamily. As to quaternary structure, homodecamer.

The protein localises to the cytoplasm. It carries out the reaction beta-D-ribopyranose = beta-D-ribofuranose. The protein operates within carbohydrate metabolism; D-ribose degradation; D-ribose 5-phosphate from beta-D-ribopyranose: step 1/2. Catalyzes the interconversion of beta-pyran and beta-furan forms of D-ribose. The polypeptide is D-ribose pyranase (Pseudomonas entomophila (strain L48)).